A 725-amino-acid polypeptide reads, in one-letter code: Phosphatase and actin regulator 4A (725 aa).

Residues 1-12 (MGQGASTQTLNP) show a composition bias toward polar residues. Positions 1 to 597 (MGQGASTQTL…SSTWNNKEQW (597 aa)) are disordered. The segment covering 55–64 (KPWKWRKKKT) has biased composition (basic residues). Composition is skewed to basic and acidic residues over residues 65–100 (SDKF…KDIP), 124–147 (GDRK…GERK), and 155–164 (KRNDGTERMT). The RPEL 1 repeat unit spans residues 75–100 (LVLERKMSVRKPREELIERGLLKDIP). Polar residues predominate over residues 166–177 (MIQSFQKMSLMQ). Over residues 212-221 (VIAAPSSAEP) the composition is skewed to low complexity. Over residues 222-235 (APVPPPPIAKPPPR) the composition is skewed to pro residues. Low complexity-rich tracts occupy residues 265-276 (PAHTTPATVSTH) and 292-313 (PAHV…LLKQ). Polar residues predominate over residues 359–368 (TPVTKRNSGD). Positions 374–384 (PEPPPPAPTSV) are enriched in pro residues. The span at 385–401 (PIPAAAPISAPPSTQSD) shows a compositional bias: low complexity. A compositionally biased stretch (pro residues) spans 402-417 (PPSPTTEPPSQPPPLP). Residues 497-510 (QKPELEPRSRRGLV) show a composition bias toward basic and acidic residues. 2 stretches are compositionally biased toward acidic residues: residues 522–536 (AGSE…ESDS) and 545–554 (DNEEDDDEED). Basic and acidic residues predominate over residues 567–585 (KDTLALKLERQQEKEKSQE). 2 RPEL repeats span residues 606–631 (TALT…LAKN) and 644–669 (RRLT…RFHE).

Belongs to the phosphatase and actin regulator family. In terms of assembly, binds ppp1ca and actin.

It localises to the cytoplasm. The protein localises to the cell projection. The protein resides in the lamellipodium. Functionally, regulator of protein phosphatase 1 (PP1) required for neural tube and optic fissure closure, and enteric neural crest cell (ENCCs) migration during development. Acts as an activator of PP1. During neural tube closure, localizes to the ventral neural tube and activates PP1, leading to down-regulate cell proliferation within cranial neural tissue and the neural retina. Also acts as a regulator of migration of enteric neural crest cells (ENCCs) by activating PP1, leading to repression of the integrin signaling through the rho/rock pathway. This Danio rerio (Zebrafish) protein is Phosphatase and actin regulator 4A (phactr4a).